Consider the following 248-residue polypeptide: Probable aquaporin TIP2-1 (248 aa).

Transmembrane regions (helical) follow at residues 20–40 (AYVA…GSAI) and 54–74 (AGLV…VSVA). Positions 83–85 (NPA) match the NPA 1 motif. The next 3 helical transmembrane spans lie at 97-119 (TILT…CLLL), 141-161 (GVVM…ATAA), and 168-188 (LGTI…LAAG). An NPA 2 motif is present at residues 196–198 (NPA). Residues 217 to 237 (WVGPLIGGGLAGLVYGDVFIG) traverse the membrane as a helical segment.

The protein belongs to the MIP/aquaporin (TC 1.A.8) family. TIP (TC 1.A.8.10) subfamily. Expressed in roots and anthers.

Its subcellular location is the vacuole membrane. In terms of biological role, aquaporins facilitate the transport of water and small neutral solutes across cell membranes. May be involved in transport from the vacuolar compartment to the cytoplasm. In Oryza sativa subsp. japonica (Rice), this protein is Probable aquaporin TIP2-1 (TIP2-1).